Reading from the N-terminus, the 240-residue chain is Protein FATTY ACID EXPORT 2, chloroplastic (240 aa).

The transit peptide at 1–84 directs the protein to the chloroplast; sequence MADLILSSSS…TANCVDSGVK (84 aa). The span at 97–113 shows a compositional bias: gly residues; the sequence is GGGIGGDKFGGGGGGGD. The disordered stretch occupies residues 97–134; that stretch reads GGGIGGDKFGGGGGGGDGNDDGGEDDKEESDGKKSTPL. Over residues 114–125 the composition is skewed to acidic residues; it reads GNDDGGEDDKEE. 3 consecutive transmembrane segments (helical) span residues 164–184, 186–206, and 214–234; these read SLLA…QLPT, PVLA…VMGT, and IFPA…YIHG.

This sequence belongs to the TMEM14 family.

The protein resides in the plastid. It localises to the chloroplast membrane. Its function is as follows. May be involved in free fatty acids export from the plastids. The polypeptide is Protein FATTY ACID EXPORT 2, chloroplastic (Arabidopsis thaliana (Mouse-ear cress)).